The chain runs to 30 residues: Conopeptide Vi002 (30 aa).

In terms of tissue distribution, expressed by the venom gland.

It localises to the secreted. This is Conopeptide Vi002 from Conus virgo (Virgin cone).